A 160-amino-acid polypeptide reads, in one-letter code: Succinate dehydrogenase assembly factor 2-A, mitochondrial (160 aa).

The transit peptide at 1-30 (MLRQLKLTLNISRWIFMPWQRQASASSSQV) directs the protein to the mitochondrion.

The protein belongs to the SDHAF2 family. As to quaternary structure, interacts with the flavoprotein subunit within the SDH catalytic dimer.

The protein resides in the mitochondrion matrix. Plays an essential role in the assembly of succinate dehydrogenase (SDH), an enzyme complex (also referred to as respiratory complex II) that is a component of both the tricarboxylic acid (TCA) cycle and the mitochondrial electron transport chain, and which couples the oxidation of succinate to fumarate with the reduction of ubiquinone (coenzyme Q) to ubiquinol. Required for flavinylation (covalent attachment of FAD) of the flavoprotein subunit of the SDH catalytic dimer. This Drosophila persimilis (Fruit fly) protein is Succinate dehydrogenase assembly factor 2-A, mitochondrial.